A 274-amino-acid chain; its full sequence is HTH-type transcriptional regulator GadX (274 aa).

The HTH araC/xylS-type domain maps to 145 to 242 (TRVCTVINNN…GMTPTEYQER (98 aa)). 2 consecutive DNA-binding regions (H-T-H motif) follow at residues 162-183 (ARIA…REEE) and 209-232 (IKRV…RNYY).

Homodimer.

In terms of biological role, positively regulates the expression of about fifteen genes involved in acid resistance such as gadA, gadB and gadC. Depending on the conditions (growth phase and medium), can repress gadW. The chain is HTH-type transcriptional regulator GadX (gadX) from Escherichia coli (strain K12).